Here is a 311-residue protein sequence, read N- to C-terminus: Alpha/beta hydrolase domain-containing protein 17C (311 aa).

The tract at residues 48–67 (EAPASTAQQPPREEGSGEPA) is disordered. Catalysis depends on charge relay system residues Ser193, Asp258, and His287.

This sequence belongs to the AB hydrolase superfamily. ABHD17 family. Post-translationally, palmitoylated on cysteine residues located in a cysteine cluster at the N-terminus which promotes membrane localization.

The protein localises to the recycling endosome membrane. It localises to the cell projection. The protein resides in the dendritic spine. It is found in the postsynaptic density membrane. It catalyses the reaction S-hexadecanoyl-L-cysteinyl-[protein] + H2O = L-cysteinyl-[protein] + hexadecanoate + H(+). Functionally, hydrolyzes fatty acids from S-acylated cysteine residues in proteins. Has depalmitoylating activity towards NRAS. This is Alpha/beta hydrolase domain-containing protein 17C from Xenopus laevis (African clawed frog).